We begin with the raw amino-acid sequence, 211 residues long: N-(5'-phosphoribosyl)anthranilate isomerase (211 aa).

It belongs to the TrpF family.

The catalysed reaction is N-(5-phospho-beta-D-ribosyl)anthranilate = 1-(2-carboxyphenylamino)-1-deoxy-D-ribulose 5-phosphate. Its pathway is amino-acid biosynthesis; L-tryptophan biosynthesis; L-tryptophan from chorismate: step 3/5. In Pseudomonas paraeruginosa (strain DSM 24068 / PA7) (Pseudomonas aeruginosa (strain PA7)), this protein is N-(5'-phosphoribosyl)anthranilate isomerase.